A 375-amino-acid chain; its full sequence is tRNA-specific 2-thiouridylase MnmA (375 aa).

Residues 12–19 (GMSGGVDS) and Met38 each bind ATP. An interaction with target base in tRNA region spans residues 98–100 (NPD). The active-site Nucleophile is the Cys103. Residues Cys103 and Cys200 are joined by a disulfide bond. An ATP-binding site is contributed by Gly127. The interval 150-152 (KDQ) is interaction with tRNA. Cys200 serves as the catalytic Cysteine persulfide intermediate. The segment at 312-313 (RY) is interaction with tRNA.

It belongs to the MnmA/TRMU family.

It is found in the cytoplasm. It catalyses the reaction S-sulfanyl-L-cysteinyl-[protein] + uridine(34) in tRNA + AH2 + ATP = 2-thiouridine(34) in tRNA + L-cysteinyl-[protein] + A + AMP + diphosphate + H(+). Its function is as follows. Catalyzes the 2-thiolation of uridine at the wobble position (U34) of tRNA, leading to the formation of s(2)U34. The protein is tRNA-specific 2-thiouridylase MnmA of Lactobacillus delbrueckii subsp. bulgaricus (strain ATCC BAA-365 / Lb-18).